The following is a 66-amino-acid chain: MLAGIGFYRRFISPLIGPRCRFTPTCSAYGLEAIQRHGPWKGGWLTVKRLLRCHPFTPCGCDPVPD.

The protein belongs to the UPF0161 family.

It is found in the cell inner membrane. Its function is as follows. Could be involved in insertion of integral membrane proteins into the membrane. In Parasynechococcus marenigrum (strain WH8102), this protein is Putative membrane protein insertion efficiency factor.